Here is a 623-residue protein sequence, read N- to C-terminus: Riboflavin biosynthesis protein PYRR, chloroplastic (623 aa).

The N-terminal 45 residues, 1–45 (MPLPQPLLGGASPAPARAASSFLHPLLHTRHRVSTAPAAASSFVP), are a transit peptide targeting the chloroplast. One can recognise a CMP/dCMP-type deaminase domain in the interval 52 to 181 (ANDAMLLRRA…ALRNEGIQVD (130 aa)).

In the C-terminal section; belongs to the YbiA family.

The protein localises to the plastid. It localises to the chloroplast. The catalysed reaction is 5-amino-6-(5-phospho-D-ribitylamino)uracil + NADP(+) = 5-amino-6-(5-phospho-D-ribosylamino)uracil + NADPH + H(+). It carries out the reaction 2,5-diamino-6-hydroxy-4-(5-phosphoribosylamino)-pyrimidine + H2O = 2,5,6-triamino-4-hydroxypyrimidine + D-ribose 5-phosphate. The enzyme catalyses 5-amino-6-(5-phospho-D-ribosylamino)uracil + H2O = 5,6-diaminouracil + D-ribose 5-phosphate. The protein operates within cofactor biosynthesis; riboflavin biosynthesis; 5-amino-6-(D-ribitylamino)uracil from GTP: step 3/4. Its function is as follows. Pyrimidine reductase involved in the riboflavin biosynthesis pathway. Also has a non-functional N-terminal deaminase domain that lacks the catalytically essential zinc-binding residues. 39% activity when NADH replaces NADPH. No evidence for a phosphatase activity conferred by the N-terminal domain. Functionally, catalyzes the hydrolysis of the N-glycosidic bond in the first two intermediates of riboflavin biosynthesis, which are highly reactive metabolites, yielding relatively innocuous products. Thus, can divert a surplus of harmful intermediates into relatively harmless products and pre-empt the damage these intermediates would otherwise do. Has no activity against GTP, nucleoside monophosphates or ADP-ribose. This is Riboflavin biosynthesis protein PYRR, chloroplastic (PYRR) from Zea mays (Maize).